The following is a 377-amino-acid chain: Lipoyl synthase, mitochondrial (377 aa).

The [4Fe-4S] cluster site is built by cysteine 103, cysteine 108, cysteine 114, cysteine 134, cysteine 138, cysteine 141, and serine 349. Residues glutamate 119–leucine 338 enclose the Radical SAM core domain.

Belongs to the radical SAM superfamily. Lipoyl synthase family. The cofactor is [4Fe-4S] cluster.

The protein resides in the mitochondrion. The catalysed reaction is [[Fe-S] cluster scaffold protein carrying a second [4Fe-4S](2+) cluster] + N(6)-octanoyl-L-lysyl-[protein] + 2 oxidized [2Fe-2S]-[ferredoxin] + 2 S-adenosyl-L-methionine + 4 H(+) = [[Fe-S] cluster scaffold protein] + N(6)-[(R)-dihydrolipoyl]-L-lysyl-[protein] + 4 Fe(3+) + 2 hydrogen sulfide + 2 5'-deoxyadenosine + 2 L-methionine + 2 reduced [2Fe-2S]-[ferredoxin]. The protein operates within protein modification; protein lipoylation via endogenous pathway; protein N(6)-(lipoyl)lysine from octanoyl-[acyl-carrier-protein]: step 2/2. In terms of biological role, catalyzes the radical-mediated insertion of two sulfur atoms into the C-6 and C-8 positions of the octanoyl moiety bound to the lipoyl domains of lipoate-dependent enzymes, thereby converting the octanoylated domains into lipoylated derivatives. The chain is Lipoyl synthase, mitochondrial from Drosophila melanogaster (Fruit fly).